An 89-amino-acid chain; its full sequence is MSLNAETKAAIVAEYARCENDTGSPEVQIALLTASINHLQGHFQAHKGDHHSRRGLLRMVSSRRKLLDYLKGKDLSRYQDLIKRLGLRR.

This sequence belongs to the universal ribosomal protein uS15 family. In terms of assembly, part of the 30S ribosomal subunit. Forms a bridge to the 50S subunit in the 70S ribosome, contacting the 23S rRNA.

Functionally, one of the primary rRNA binding proteins, it binds directly to 16S rRNA where it helps nucleate assembly of the platform of the 30S subunit by binding and bridging several RNA helices of the 16S rRNA. In terms of biological role, forms an intersubunit bridge (bridge B4) with the 23S rRNA of the 50S subunit in the ribosome. In Vibrio cholerae serotype O1 (strain ATCC 39541 / Classical Ogawa 395 / O395), this protein is Small ribosomal subunit protein uS15.